The following is a 368-amino-acid chain: Protein PXR1 (368 aa).

The tract at residues 1 to 24 (MGLAGAKNKRKLGNDPNNTKWSRN) is disordered. Positions 15-24 (DPNNTKWSRN) are enriched in polar residues. A G-patch domain is found at 25–79 (TDTFGQKILRAQGWQPGEYLGAKDAAHAEWHTEANTTHIRVTLKDDTLGLGAKRN). Residues 144–337 (TPDEEAEEIP…GYSTPIPTGS (194 aa)) are disordered. The span at 176-186 (RRSDKEDDKLG) shows a compositional bias: basic and acidic residues. 2 stretches are compositionally biased toward basic residues: residues 187–196 (KKEKKSKKRK) and 257–277 (DKKR…KKEK). Residues 310–337 (PSSAPTPTDSNSSTPTGSGYSTPIPTGS) are compositionally biased toward low complexity.

Belongs to the PINX1 family.

The protein resides in the nucleus. The protein localises to the nucleolus. Functionally, involved in rRNA-processing at A0, A1 and A2 sites and negatively regulates telomerase. The polypeptide is Protein PXR1 (PXR1) (Chaetomium globosum (strain ATCC 6205 / CBS 148.51 / DSM 1962 / NBRC 6347 / NRRL 1970) (Soil fungus)).